A 260-amino-acid polypeptide reads, in one-letter code: MFDIGVNLTSSQFAKDRDDIVTRAFAAGVNGLLITGTNLRESQQAQKLARHYPHCWSTAGVHPHDSSQWQAATEEAIIELAAQPEVVAIGECGLDFNRNFSTPEEQERAFVAQLRIAAELNMPVFMHCRDAHERFITLLEPWLEKLPGAVLHCFTGTREEMQACVARGIYIGITGWVCDERRGLELRELLPLIPAEKLLIETDAPYLLPRDLTPKPTSRRNEPAYLPHILQRIAQWRGEDAACLAATTDTNVKTLFGISF.

A divalent metal cation is bound by residues Glu91, His127, and His152.

This sequence belongs to the metallo-dependent hydrolases superfamily. TatD-type hydrolase family. TatD subfamily. In terms of assembly, monomer. It depends on Mg(2+) as a cofactor.

It is found in the cytoplasm. In terms of biological role, 3'-5' exonuclease that prefers single-stranded DNA and RNA. May play a role in the H(2)O(2)-induced DNA damage repair. The sequence is that of 3'-5' ssDNA/RNA exonuclease TatD from Escherichia fergusonii (strain ATCC 35469 / DSM 13698 / CCUG 18766 / IAM 14443 / JCM 21226 / LMG 7866 / NBRC 102419 / NCTC 12128 / CDC 0568-73).